The primary structure comprises 300 residues: Glycine--tRNA ligase alpha subunit (300 aa).

This sequence belongs to the class-II aminoacyl-tRNA synthetase family. Tetramer of two alpha and two beta subunits.

The protein localises to the cytoplasm. The enzyme catalyses tRNA(Gly) + glycine + ATP = glycyl-tRNA(Gly) + AMP + diphosphate. The chain is Glycine--tRNA ligase alpha subunit (glyQ) from Buchnera aphidicola subsp. Baizongia pistaciae (strain Bp).